The following is a 120-amino-acid chain: NAD(P)H-quinone oxidoreductase subunit 3, chloroplastic (120 aa).

Helical transmembrane passes span 9-29, 64-84, and 88-108; these read IFWA…FVSG, MFAL…PWAM, and VLGI…IVGL.

This sequence belongs to the complex I subunit 3 family. In terms of assembly, NDH is composed of at least 16 different subunits, 5 of which are encoded in the nucleus.

It localises to the plastid. The protein localises to the chloroplast thylakoid membrane. The enzyme catalyses a plastoquinone + NADH + (n+1) H(+)(in) = a plastoquinol + NAD(+) + n H(+)(out). The catalysed reaction is a plastoquinone + NADPH + (n+1) H(+)(in) = a plastoquinol + NADP(+) + n H(+)(out). Its function is as follows. NDH shuttles electrons from NAD(P)H:plastoquinone, via FMN and iron-sulfur (Fe-S) centers, to quinones in the photosynthetic chain and possibly in a chloroplast respiratory chain. The immediate electron acceptor for the enzyme in this species is believed to be plastoquinone. Couples the redox reaction to proton translocation, and thus conserves the redox energy in a proton gradient. The protein is NAD(P)H-quinone oxidoreductase subunit 3, chloroplastic of Daucus carota (Wild carrot).